The primary structure comprises 157 residues: 2-C-methyl-D-erythritol 2,4-cyclodiphosphate synthase (157 aa).

Residues D8 and H10 each contribute to the a divalent metal cation site. 4-CDP-2-C-methyl-D-erythritol 2-phosphate contacts are provided by residues 8 to 10 (DVH) and 34 to 35 (HS). H42 lines the a divalent metal cation pocket. 4-CDP-2-C-methyl-D-erythritol 2-phosphate-binding positions include 56–58 (DIG), 132–135 (TTNE), and R142.

This sequence belongs to the IspF family. In terms of assembly, homotrimer. It depends on a divalent metal cation as a cofactor.

The catalysed reaction is 4-CDP-2-C-methyl-D-erythritol 2-phosphate = 2-C-methyl-D-erythritol 2,4-cyclic diphosphate + CMP. It participates in isoprenoid biosynthesis; isopentenyl diphosphate biosynthesis via DXP pathway; isopentenyl diphosphate from 1-deoxy-D-xylulose 5-phosphate: step 4/6. In terms of biological role, involved in the biosynthesis of isopentenyl diphosphate (IPP) and dimethylallyl diphosphate (DMAPP), two major building blocks of isoprenoid compounds. Catalyzes the conversion of 4-diphosphocytidyl-2-C-methyl-D-erythritol 2-phosphate (CDP-ME2P) to 2-C-methyl-D-erythritol 2,4-cyclodiphosphate (ME-CPP) with a corresponding release of cytidine 5-monophosphate (CMP). The sequence is that of 2-C-methyl-D-erythritol 2,4-cyclodiphosphate synthase from Chlorobium phaeovibrioides (strain DSM 265 / 1930) (Prosthecochloris vibrioformis (strain DSM 265)).